The chain runs to 206 residues: Ribosomal RNA small subunit methyltransferase G (206 aa).

S-adenosyl-L-methionine is bound by residues G73, L78, V124–E125, and R139.

This sequence belongs to the methyltransferase superfamily. RNA methyltransferase RsmG family.

Its subcellular location is the cytoplasm. The enzyme catalyses guanosine(527) in 16S rRNA + S-adenosyl-L-methionine = N(7)-methylguanosine(527) in 16S rRNA + S-adenosyl-L-homocysteine. Functionally, specifically methylates the N7 position of guanine in position 527 of 16S rRNA. This is Ribosomal RNA small subunit methyltransferase G from Sodalis glossinidius (strain morsitans).